A 317-amino-acid chain; its full sequence is Acetyl-coenzyme A carboxylase carboxyl transferase subunit alpha (317 aa).

In terms of domain architecture, CoA carboxyltransferase C-terminal spans 41–291 (KVDKLLRSTY…SMALDSALRD (251 aa)).

Belongs to the AccA family. As to quaternary structure, acetyl-CoA carboxylase is a heterohexamer composed of biotin carboxyl carrier protein (AccB), biotin carboxylase (AccC) and two subunits each of ACCase subunit alpha (AccA) and ACCase subunit beta (AccD).

Its subcellular location is the cytoplasm. The enzyme catalyses N(6)-carboxybiotinyl-L-lysyl-[protein] + acetyl-CoA = N(6)-biotinyl-L-lysyl-[protein] + malonyl-CoA. It functions in the pathway lipid metabolism; malonyl-CoA biosynthesis; malonyl-CoA from acetyl-CoA: step 1/1. Its function is as follows. Component of the acetyl coenzyme A carboxylase (ACC) complex. First, biotin carboxylase catalyzes the carboxylation of biotin on its carrier protein (BCCP) and then the CO(2) group is transferred by the carboxyltransferase to acetyl-CoA to form malonyl-CoA. This chain is Acetyl-coenzyme A carboxylase carboxyl transferase subunit alpha, found in Paramagnetospirillum magneticum (strain ATCC 700264 / AMB-1) (Magnetospirillum magneticum).